The chain runs to 584 residues: Lamin-B1 (584 aa).

Residues 1-22 (MAAAVAPLSPQPRGAAASAALS) form a disordered region. The segment at 2–33 (AAAVAPLSPQPRGAAASAALSPTRISRLQEKE) is head. Position 22 is a phosphoserine (serine 22). The IF rod domain occupies 31–387 (EKEELRQLND…KLLESEEERL (357 aa)). The interval 34–70 (ELRQLNDRLAVYIDKVRSLETENSALQRRVSEREQVC) is coil 1A. The segment at 81–218 (FETELADARK…NVYEEEIKET (138 aa)) is coil 1B. The interval 243-385 (QALKEIREQH…YRKLLESEEE (143 aa)) is coil 2. A tail region spans residues 386–584 (RLRLSPGPSS…RKPERSCVVM (199 aa)). Disordered regions lie at residues 388–431 (RLSP…SVSI) and 548–584 (TVNE…CVVM). The segment covering 394-408 (SSRVTVSRASSSRSV) has biased composition (low complexity). The Nuclear localization signal signature appears at 414 to 419 (KRKRID). Positions 429–545 (VSISHSASAT…EEVAQRSTVF (117 aa)) constitute an LTD domain. The segment covering 551 to 565 (EGEEEEEEGEEEILE) has biased composition (acidic residues). Residues 575–584 (RKPERSCVVM) show a composition bias toward basic and acidic residues. Cysteine methyl ester is present on cysteine 581. Cysteine 581 carries S-farnesyl cysteine lipidation. Residues 582 to 584 (VVM) constitute a propeptide, removed in mature form.

The protein belongs to the intermediate filament family. In terms of assembly, homodimer. Lamin dimers then assemble into dimeric head-to-tail polymers. Ultimately, two head-to-tail polymers assemble laterally into a protofilament with a uniformly shaped rod of 3.5 nm in diameter. Post-translationally, phosphorylation plays a key role in lamin organization, subcellular localization and nuclear envelope disintegration. Phosphorylation by CDK1 at Ser-22 at the onset of mitosis drives lamin disassembly and nuclear envelope breakdown.

The protein localises to the nucleus lamina. It is found in the nucleus envelope. Its subcellular location is the nucleus. It localises to the nucleoplasm. The protein resides in the nucleus matrix. Lamins are intermediate filament proteins that assemble into a filamentous meshwork, and which constitute the major components of the nuclear lamina, a fibrous layer on the nucleoplasmic side of the inner nuclear membrane. Lamins provide a framework for the nuclear envelope, bridging the nuclear envelope and chromatin. Plays an important role in nuclear assembly, chromatin organization, nuclear membrane and telomere dynamics. This Gallus gallus (Chicken) protein is Lamin-B1 (LMNB1).